A 377-amino-acid polypeptide reads, in one-letter code: Protein RecA (377 aa).

An ATP-binding site is contributed by 76–83 (GPESSGKT).

It belongs to the RecA family.

It localises to the cytoplasm. In terms of biological role, can catalyze the hydrolysis of ATP in the presence of single-stranded DNA, the ATP-dependent uptake of single-stranded DNA by duplex DNA, and the ATP-dependent hybridization of homologous single-stranded DNAs. It interacts with LexA causing its activation and leading to its autocatalytic cleavage. The sequence is that of Protein RecA from Corynebacterium aurimucosum (strain ATCC 700975 / DSM 44827 / CIP 107346 / CN-1) (Corynebacterium nigricans).